We begin with the raw amino-acid sequence, 219 residues long: RING finger protein nenya (219 aa).

The segment at 6 to 48 (CNKCFRRRNVEPTLIFHMTQCQHVLCASCLSESSTDKKCPLCK) adopts an RING-type zinc-finger fold. Residues 161–181 (NQARGLRPRTPSVTTSDNTQS) form a disordered region.

In terms of assembly, may interact with itself, with narya and vilya through its RING-type zinc finger.

In terms of biological role, required for the formation of DNA double-strand breaks together with narya and vilya during the meiotic recombination process. Plays a redundant role with narya in chromosome segregation during female meiosis. The chain is RING finger protein nenya from Drosophila melanogaster (Fruit fly).